Reading from the N-terminus, the 250-residue chain is MGRGRVELKRIENKINRQVTFAKRRNGLLKKAYELSVLCDAEVSLIVFSNRGKLYEFCSTSNMLKTLERYQKCSYGSIEVNNKPAKELENSYREYLKLKGRYENLQRQQRNLLGEDLGPLNSKELEQLERQLDGSLKQVRCIKTQYMLDQLSDLQGKEHILLDANRALSMKLEDMIGVRHHHIGGGWEGGDQQNIAYGHPQAHSQGLYQSLECDPTLQIGYSHPVCSEQMAVTVQGQSQQGNGYIPGWML.

An MADS-box domain is found at 3–57; sequence RGRVELKRIENKINRQVTFAKRRNGLLKKAYELSVLCDAEVSLIVFSNRGKLYEF. The stretch at 85 to 150 forms a coiled coil; that stretch reads AKELENSYRE…CIKTQYMLDQ (66 aa). Residues 88–178 form the K-box domain; the sequence is LENSYREYLK…SMKLEDMIGV (91 aa).

As to quaternary structure, heterodimer with AGAMOUS capable of binding to CArG-box sequences. Interacts with TT16/AGL32.

The protein resides in the nucleus. Its function is as follows. Probable transcription factor. Functions with SEPALLATA1/AGL2 and SEPALLATA3/AGL9 to ensure proper development of petals, stamens and carpels and to prevent the indeterminate growth of the flower meristem. Forms a heterodimer via the K-box domain with AG, that could be involved in genes regulation during floral meristem development. This Arabidopsis thaliana (Mouse-ear cress) protein is Developmental protein SEPALLATA 2 (SEP2).